Here is a 674-residue protein sequence, read N- to C-terminus: DNA ligase (674 aa).

NAD(+)-binding positions include 34-38, 83-84, and Glu-114; these read DSEYD and SL. Lys-116 serves as the catalytic N6-AMP-lysine intermediate. NAD(+) is bound by residues Arg-137, Glu-174, Lys-290, and Lys-314. Residues Cys-405, Cys-408, Cys-424, and Cys-429 each coordinate Zn(2+). In terms of domain architecture, BRCT spans 587–674; sequence QSGTQFDGKM…KLSLIENTKF (88 aa).

It belongs to the NAD-dependent DNA ligase family. LigA subfamily. It depends on Mg(2+) as a cofactor. Mn(2+) is required as a cofactor.

It carries out the reaction NAD(+) + (deoxyribonucleotide)n-3'-hydroxyl + 5'-phospho-(deoxyribonucleotide)m = (deoxyribonucleotide)n+m + AMP + beta-nicotinamide D-nucleotide.. Functionally, DNA ligase that catalyzes the formation of phosphodiester linkages between 5'-phosphoryl and 3'-hydroxyl groups in double-stranded DNA using NAD as a coenzyme and as the energy source for the reaction. It is essential for DNA replication and repair of damaged DNA. The chain is DNA ligase from Endomicrobium trichonymphae.